The following is a 474-amino-acid chain: Dol-P-Glc:Glc(2)Man(9)GlcNAc(2)-PP-Dol alpha-1,2-glucosyltransferase (474 aa).

The Cytoplasmic portion of the chain corresponds to 1 to 6 (MAQLEG). A helical transmembrane segment spans residues 7-27 (YYFSAALSCTFLVSCLLFSAF). The Extracellular portion of the chain corresponds to 28 to 64 (SRALREPYMDEIFHLPQAQRYCEGRFSLSQWDPMITT). The chain crosses the membrane as a helical span at residues 65–85 (LPGLYLVSVGVVKPASWLLGW). At 86-97 (SEHVICSIGVLR) the chain is on the cytoplasmic side. Residues 98–118 (FVNLLFSVGNFYLLYLLFRKV) form a helical membrane-spanning segment. Over 119–126 (QPRNKASS) the chain is Extracellular. A helical membrane pass occupies residues 127–147 (SIQRILSTLTLAVFPTLYFFN). The Cytoplasmic segment spans residues 148 to 150 (FLY). Residues 151–171 (YTEAGSVFFTLFAYLMCLYGN) form a helical membrane-spanning segment. At 172 to 175 (HRTS) the chain is on the extracellular side. The helical transmembrane segment at 176-196 (ALLGFCGFMFRQTNIIWAAFC) threads the bilayer. At 197–256 (AGHLIAQKCSEAWKIELQKKKEERLAPTKGPLSELRRVLQFLLVYAMSLKNLRMLFLLTW) the chain is on the cytoplasmic side. Residues 257-277 (PYVLLLLAFFAFVVVNGGIVV) traverse the membrane as a helical segment. Residues 278-283 (GDRSSH) lie on the Extracellular side of the membrane. The chain crosses the membrane as a helical span at residues 284–304 (EACLHFPQLFYFFSFTAFFSF). Topologically, residues 305–317 (PHLLSLTKVKTFL) are cytoplasmic. A helical transmembrane segment spans residues 318–338 (SLVWKRRVQFSVVTLVSILLV). Residues 339–365 (WKFTYVHKYLLADNRHYTFYVWKRVFQ) are Extracellular-facing. A helical membrane pass occupies residues 366 to 386 (RHEVVKYLLVPAYIFAGWAIA). Residues 387–392 (DSLKAK) lie on the Cytoplasmic side of the membrane. The chain crosses the membrane as a helical span at residues 393–413 (SIFWNLMFFVCLVASTVPQKL). Over 414–436 (LEFRYFILPYIIYRLNIPLPPIS) the chain is Extracellular. Residues 437–457 (RLVCELGCYTVVNFVTFYIFL) traverse the membrane as a helical segment. At 458-473 (NKTFQWPNSQDIQRFM) the chain is on the cytoplasmic side.

Belongs to the ALG10 glucosyltransferase family. Interacts with KCNH1; may regulate KCNH1, possibly by regulating its N-glycosylation. Interacts with KCNH2; may reduce KCNH2 sensitivity to classic proarrhythmic drug blockade, possibly by regulating its N-glycosylation.

The protein resides in the endoplasmic reticulum membrane. It catalyses the reaction an alpha-D-Glc-(1-&gt;3)-alpha-D-Glc-(1-&gt;3)-alpha-D-Man-(1-&gt;2)-alpha-D-Man-(1-&gt;2)-alpha-D-Man-(1-&gt;3)-[alpha-D-Man-(1-&gt;2)-alpha-D-Man-(1-&gt;3)-[alpha-D-Man-(1-&gt;2)-alpha-D-Man-(1-&gt;6)]-alpha-D-Man-(1-&gt;6)]-beta-D-Man-(1-&gt;4)-beta-D-GlcNAc-(1-&gt;4)-alpha-D-GlcNAc-diphospho-di-trans,poly-cis-dolichol + a di-trans,poly-cis-dolichyl beta-D-glucosyl phosphate = a alpha-D-Glc-(1-&gt;2)-alpha-D-Glc-(1-&gt;3)-alpha-D-Glc-(1-&gt;3)-alpha-D-Man-(1-&gt;2)-alpha-D-Man-(1-&gt;2)-alpha-D-Man-(1-&gt;3)-[alpha-D-Man-(1-&gt;2)-alpha-D-Man-(1-&gt;3)-[alpha-D-Man-(1-&gt;2)-alpha-D-Man-(1-&gt;6)]-alpha-D-Man-(1-&gt;6)]-beta-D-Man-(1-&gt;4)-beta-D-GlcNAc-(1-&gt;4)-alpha-D-GlcNAc-diphospho-di-trans,poly-cis-dolichol + a di-trans,poly-cis-dolichyl phosphate + H(+). The protein operates within protein modification; protein glycosylation. Functionally, dol-P-Glc:Glc(2)Man(9)GlcNAc(2)-PP-Dol alpha-1,2-glucosyltransferase that operates in the biosynthetic pathway of dolichol-linked oligosaccharides, the glycan precursors employed in protein asparagine (N)-glycosylation. The assembly of dolichol-linked oligosaccharides begins on the cytosolic side of the endoplasmic reticulum membrane and finishes in its lumen. The sequential addition of sugars to dolichol pyrophosphate produces dolichol-linked oligosaccharides containing fourteen sugars, including two GlcNAcs, nine mannoses and three glucoses. Once assembled, the oligosaccharide is transferred from the lipid to nascent proteins by oligosaccharyltransferases. In the lumen of the endoplasmic reticulum, adds the third and last glucose residue from dolichyl phosphate glucose (Dol-P-Glc) onto the lipid-linked oligosaccharide intermediate Glc(2)Man(9)GlcNAc(2)-PP-Dol to produce Glc(3)Man(9)GlcNAc(2)-PP-Dol. The polypeptide is Dol-P-Glc:Glc(2)Man(9)GlcNAc(2)-PP-Dol alpha-1,2-glucosyltransferase (Mus musculus (Mouse)).